Here is a 471-residue protein sequence, read N- to C-terminus: Argininosuccinate lyase (471 aa).

Belongs to the lyase 1 family. Argininosuccinate lyase subfamily.

Its subcellular location is the cytoplasm. The catalysed reaction is 2-(N(omega)-L-arginino)succinate = fumarate + L-arginine. Its pathway is amino-acid biosynthesis; L-arginine biosynthesis; L-arginine from L-ornithine and carbamoyl phosphate: step 3/3. This chain is Argininosuccinate lyase, found in Cereibacter sphaeroides (strain ATCC 17025 / ATH 2.4.3) (Rhodobacter sphaeroides).